The following is a 350-amino-acid chain: Guanine nucleotide-binding protein G(t) subunit alpha-1 (350 aa).

Positions 1–21 (MGAGASAEEKHSRELEKKLKE) are disordered. Residue G2 is the site of N-myristoyl glycine attachment. The segment covering 7–21 (AEEKHSRELEKKLKE) has biased composition (basic and acidic residues). Positions 28–350 (RTVKLLLLGA…KENLKDCGLF (323 aa)) constitute a G-alpha domain. The segment at 31–44 (KLLLLGAGESGKST) is G1 motif. 36 to 43 (GAGESGKS) contacts GTP. Residue S43 coordinates Mg(2+). Position 142 is a phosphotyrosine (Y142). GTP-binding positions include D146, 171 to 177 (LRSRVKT), G199, 265 to 268 (NKKD), and A322. The G2 motif stretch occupies residues 169 to 177 (DVLRSRVKT). T177 is a Mg(2+) binding site. The G3 motif stretch occupies residues 192–201 (FRMFDVGGQR). Residues 261–268 (VLFLNKKD) are G4 motif. Residues 320 to 325 (TCATDT) are G5 motif. The interaction with RHO stretch occupies residues 340–350 (IKENLKDCGLF).

In terms of assembly, heterotrimeric G proteins are composed of 3 subunits alpha, beta and gamma. The alpha chain contains the guanine nucleotide binding site. Interacts with RHO. Interacts with RGS9 and PDE6G. Interacts (when myristoylated) with UNC119; interaction is required for localization in sensory neurons. In terms of tissue distribution, rod.

The protein localises to the cell projection. The protein resides in the cilium. It is found in the photoreceptor outer segment. Its subcellular location is the membrane. It localises to the photoreceptor inner segment. Its function is as follows. Functions as a signal transducer for the rod photoreceptor RHO. Required for normal RHO-mediated light perception by the retina. Guanine nucleotide-binding proteins (G proteins) function as transducers downstream of G protein-coupled receptors (GPCRs), such as the photoreceptor RHO. The alpha chain contains the guanine nucleotide binding site and alternates between an active, GTP-bound state and an inactive, GDP-bound state. Activated RHO promotes GDP release and GTP binding. Signaling is mediated via downstream effector proteins, such as cGMP-phosphodiesterase. This chain is Guanine nucleotide-binding protein G(t) subunit alpha-1 (GNAT1), found in Bos taurus (Bovine).